The primary structure comprises 94 residues: Co-chaperonin GroES (94 aa).

Belongs to the GroES chaperonin family. Heptamer of 7 subunits arranged in a ring. Interacts with the chaperonin GroEL.

Its subcellular location is the cytoplasm. Functionally, together with the chaperonin GroEL, plays an essential role in assisting protein folding. The GroEL-GroES system forms a nano-cage that allows encapsulation of the non-native substrate proteins and provides a physical environment optimized to promote and accelerate protein folding. GroES binds to the apical surface of the GroEL ring, thereby capping the opening of the GroEL channel. This Clostridium perfringens (strain ATCC 13124 / DSM 756 / JCM 1290 / NCIMB 6125 / NCTC 8237 / Type A) protein is Co-chaperonin GroES.